The primary structure comprises 282 residues: MLPKNAIEKIQANVSKPCFWKSLSPGQTWKSKSMRIIPEDFVRRTRGAFEHRVVFSVRWENSWQLWLEREKNELFMIEEDWNEFVDDNHLGPNDNLFIKHDETMNLEVQIFKNNGVEIIDVPLGVEPETEPFHPTPKKPHKETTPASSFASGSGCSANGGTNGRGKQRSSDVKNPERYLLNPENPYFVQAVTKRNDVLYVSRPVVQSYRLKFGPVKSTITYLLPGEKKEEGENRIYNGKPCFSGWSVLCRRHNLNIGDSVVCELERSGGVVTAVRVHFVKKD.

A DNA-binding region (TF-B3) is located at residues tryptophan 20–asparagine 114. The disordered stretch occupies residues proline 127–tyrosine 178. The segment covering threonine 144–glycine 159 has biased composition (low complexity).

It is found in the nucleus. The polypeptide is B3 domain-containing protein At5g25475 (Arabidopsis thaliana (Mouse-ear cress)).